The chain runs to 102 residues: FMRFamide-like neuropeptides 9 (102 aa).

Positions 1–19 are cleaved as a signal peptide; the sequence is MNQFYALFLVACIAAMANA. Residues 20–63 constitute a propeptide that is removed on maturation; that stretch reads YEEPDLDALAEFCGKESNRKYCDQIAQLATQHAIGINQEQVRME. At phenylalanine 72 the chain carries Phenylalanine amide. Positions 75 to 90 are excised as a propeptide; that stretch reads RSGYPLVIDDEEMRMD. Phenylalanine amide is present on phenylalanine 99.

It belongs to the FARP (FMRFamide related peptide) family. As to expression, each flp gene is expressed in a distinct set of neurons.

Its subcellular location is the secreted. Its function is as follows. FMRFamides and FMRFamide-like peptides are neuropeptides. Functionally, KPSFVRF-amide: Has no effect on somatic body wall muscle, inhibits contraction of vaginal vera muscle, and inhibits the activity of the dissected pharyngeal myogenic muscle system. Acts as a ligand for the npr-22 receptor in vitro. The protein is FMRFamide-like neuropeptides 9 of Caenorhabditis elegans.